The primary structure comprises 142 residues: Alpha-lactalbumin (142 aa).

A signal peptide spans 1 to 19 (MMSFVSLLLVGILFHATQA). Positions 20–142 (EQLTKCEVFR…KLDQWLCEKL (123 aa)) constitute a C-type lysozyme domain. Intrachain disulfides connect cysteine 25–cysteine 139, cysteine 47–cysteine 130, cysteine 80–cysteine 96, and cysteine 92–cysteine 110. Asparagine 64 is a glycosylation site (N-linked (GlcNAc...) asparagine). Lysine 98, aspartate 101, aspartate 103, aspartate 106, and aspartate 107 together coordinate Ca(2+).

Belongs to the glycosyl hydrolase 22 family. As to quaternary structure, lactose synthase (LS) is a heterodimer of a catalytic component, beta1,4-galactosyltransferase (beta4Gal-T1) and a regulatory component, alpha-lactalbumin (LA). As to expression, mammary gland specific. Secreted in milk.

The protein resides in the secreted. Its function is as follows. Regulatory subunit of lactose synthase, changes the substrate specificity of galactosyltransferase in the mammary gland making glucose a good acceptor substrate for this enzyme. This enables LS to synthesize lactose, the major carbohydrate component of milk. In other tissues, galactosyltransferase transfers galactose onto the N-acetylglucosamine of the oligosaccharide chains in glycoproteins. In Bos taurus (Bovine), this protein is Alpha-lactalbumin (LALBA).